The following is a 216-amino-acid chain: Superoxide dismutase [Mn], mitochondrial (216 aa).

The transit peptide at 1–18 directs the protein to the mitochondrion; it reads MSFLNRNLSRTIKAAVRG. Residues His-44, His-92, Asp-176, and His-180 each coordinate Mn(2+).

The protein belongs to the iron/manganese superoxide dismutase family. Mn(2+) is required as a cofactor.

It is found in the mitochondrion matrix. It catalyses the reaction 2 superoxide + 2 H(+) = H2O2 + O2. Its function is as follows. Destroys superoxide anion radicals which are normally produced within the cells and which are toxic to biological systems. In Glossina morsitans morsitans (Savannah tsetse fly), this protein is Superoxide dismutase [Mn], mitochondrial (Sod2).